Here is a 146-residue protein sequence, read N- to C-terminus: Hemoglobin subunit beta (146 aa).

In terms of domain architecture, Globin spans 2-146; it reads HWTADEKQLI…VAHALALGYH (145 aa). His-63 and His-92 together coordinate heme b.

Belongs to the globin family. As to quaternary structure, heterotetramer of two alpha chains and two beta chains. As to expression, red blood cells.

Involved in oxygen transport from the lung to the various peripheral tissues. This Chrysemys picta bellii (Western painted turtle) protein is Hemoglobin subunit beta (HBB).